The following is a 648-amino-acid chain: Indolepyruvate oxidoreductase subunit IorA (648 aa).

2 consecutive 4Fe-4S ferredoxin-type domains span residues 585 to 614 (PIYQ…WDAE) and 616 to 645 (KKAR…KVRE). [4Fe-4S] cluster contacts are provided by cysteine 594, cysteine 597, cysteine 600, cysteine 606, cysteine 625, cysteine 628, cysteine 631, and cysteine 635.

In terms of assembly, heterodimer of the IorA and IorB subunits. [4Fe-4S] cluster is required as a cofactor.

The catalysed reaction is indole-3-pyruvate + 2 oxidized [2Fe-2S]-[ferredoxin] + CoA = (indol-3-yl)acetyl-CoA + 2 reduced [2Fe-2S]-[ferredoxin] + CO2 + H(+). Catalyzes the ferredoxin-dependent oxidative decarboxylation of arylpyruvates. The polypeptide is Indolepyruvate oxidoreductase subunit IorA (iorA) (Pyrococcus horikoshii (strain ATCC 700860 / DSM 12428 / JCM 9974 / NBRC 100139 / OT-3)).